The primary structure comprises 121 residues: Large ribosomal subunit protein uL18 (121 aa).

The protein belongs to the universal ribosomal protein uL18 family. Part of the 50S ribosomal subunit; part of the 5S rRNA/L5/L18/L25 subcomplex. Contacts the 5S and 23S rRNAs.

Functionally, this is one of the proteins that bind and probably mediate the attachment of the 5S RNA into the large ribosomal subunit, where it forms part of the central protuberance. The protein is Large ribosomal subunit protein uL18 of Desulfotalea psychrophila (strain LSv54 / DSM 12343).